We begin with the raw amino-acid sequence, 190 residues long: MSKYMGGKEASSVLGVHQRTLYQWDKKGWIKTIRTKGGKRLYDVGSYLADKDEESKEDHKLSICYVRVSSNSQKDDLERQIKFMKKKYPNHTIIKDISSGINMNRKGLNKIIDLAIEGRIKEVVVAYKDRLAIFGFSLIERLIETYSDGKIVVVRKKENQEPQEELIEDMMDVMNVFTARRNGSRKYSNK.

Positions 11–30 (SSVLGVHQRTLYQWDKKGWI) form a DNA-binding region, H-T-H motif. The region spanning 61–190 (LSICYVRVSS…RNGSRKYSNK (130 aa)) is the Resolvase/invertase-type recombinase catalytic domain. A coiled-coil region spans residues 67–92 (RVSSNSQKDDLERQIKFMKKKYPNHT). S69 serves as the catalytic O-(5'-phospho-DNA)-serine intermediate.

Belongs to the site-specific recombinase resolvase family.

Its function is as follows. Resolvase catalyzes the resolution (a site-specific recombination) of the cointegrated replicon to yield the final transposition products. This is Putative resolvase R80 from Acanthamoeba polyphaga mimivirus (APMV).